Reading from the N-terminus, the 175-residue chain is ADP-ribosylation factor 6 (175 aa).

A lipid anchor (N-myristoyl glycine) is attached at Gly2. GTP-binding positions include Gly20–Thr27, Asp63–Gln67, and Asn122–Asp125.

It belongs to the small GTPase superfamily. Arf family. In terms of tissue distribution, expressed in the head (at protein level).

It is found in the golgi apparatus. Activation is generally mediated by a guanine exchange factor (GEF), while inactivation through hydrolysis of bound GTP is catalyzed by a GTPase activating protein (GAP). May be activated by Efa6. Functionally, GTP-binding protein involved in protein trafficking; may modulate vesicle budding and uncoating within the Golgi apparatus. Promotes cell movement and remodeling of the actin cytoskeleton during compound eye morphogenesis. Required for normal ethanol-induced tolerance and preference. Probably after Efa6-mediated activation, counteracts ethanol-induced sedation. This chain is ADP-ribosylation factor 6, found in Drosophila melanogaster (Fruit fly).